The primary structure comprises 357 residues: G-protein coupled receptor 183 (357 aa).

Residues 1-32 (MANNFTTPLAASHGNNCDLYAHHSTARILMPL) are Extracellular-facing. Asparagine 4 is a glycosylation site (N-linked (GlcNAc...) asparagine). The helical transmembrane segment at 33–53 (HYSLVFIIGLVGNLLALVVIV) threads the bilayer. Residues 54-68 (QNRKKINSTTLYSMN) are Cytoplasmic-facing. A helical transmembrane segment spans residues 69-89 (LVISDILFTTALPTRIVYYAL). Arginine 83 contacts 7alpha,25-dihydroxycholesterol. Topologically, residues 90–101 (GFDWRIGDALCR) are extracellular. A disulfide bridge links cysteine 100 with cysteine 177. A helical transmembrane segment spans residues 102 to 122 (ITALLFYINTYAGVNFMTCLS). Residues tyrosine 108 and tyrosine 112 each contribute to the 7alpha,25-dihydroxycholesterol site. The interval 122 to 130 (SIDRFFAVV) is interaction with G proteins. Residues 123-143 (IDRFFAVVHPLRYNKIKRIEY) lie on the Cytoplasmic side of the membrane. A helical membrane pass occupies residues 144–164 (AKGICVFVWILVFAQTLPLLL). Residues 165 to 190 (KPMSKQEADKTTCMEYPNFEGTASLP) are Extracellular-facing. A helical transmembrane segment spans residues 191-211 (WILLGACLLGYVLPLAIILLC). Residues 212–240 (YSQICCKLFRTAKQNPLTEKSGVNKKALN) lie on the Cytoplasmic side of the membrane. The helical transmembrane segment at 241–261 (TIILIIGVFVLCFTPYHVAIM) threads the bilayer. Residue tyrosine 256 coordinates 7alpha,25-dihydroxycholesterol. Topologically, residues 262-287 (QHMVKTLYAPGALGCGVRHSFQISLH) are extracellular. A helical transmembrane segment spans residues 288-308 (FTVCLMNFNCCMDPFIYFFAC). Residues 309–357 (KGYKRKVMKMLKRQVSVSISSAVRSAPEENSREMTESQMMIHSKASNGR) lie on the Cytoplasmic side of the membrane. A phosphoserine mark is found at serine 324 and serine 345. The disordered stretch occupies residues 336 to 357 (EENSREMTESQMMIHSKASNGR). Over residues 344–357 (ESQMMIHSKASNGR) the composition is skewed to polar residues.

It belongs to the G-protein coupled receptor 1 family. In terms of assembly, homodimer and heterodimer. Heterodimerizes with CXCR5; leading to modulate the interaction between of CXCL13 and CXCR5.

It is found in the cell membrane. In terms of biological role, G-protein coupled receptor expressed in lymphocytes that acts as a chemotactic receptor for B-cells, T-cells, splenic dendritic cells, monocytes/macrophages and astrocytes. Receptor for oxysterol 7-alpha,25-dihydroxycholesterol (7-alpha,25-OHC) and other related oxysterols. Mediates cell positioning and movement of a number of cells by binding the 7-alpha,25-OHC ligand that forms a chemotactic gradient. Binding of 7-alpha,25-OHC mediates the correct localization of B-cells during humoral immune responses. Guides B-cell movement along the B-cell zone-T-cell zone boundary and later to interfollicular and outer follicular regions. Its specific expression during B-cell maturation helps position B-cells appropriately for mounting T-dependent antibody responses. Collaborates with CXCR5 to mediate B-cell migration; probably by forming a heterodimer with CXCR5 that affects the interaction between of CXCL13 and CXCR5. Also acts as a chemotactic receptor for some T-cells upon binding to 7-alpha,25-OHC ligand. Promotes follicular helper T (Tfh) cells differentiation by positioning activated T-cells at the follicle-T-zone interface, promoting contact of newly activated CD4 T-cells with activated dendritic cells and exposing them to Tfh-cell-promoting inducible costimulator (ICOS) ligand. Expression in splenic dendritic cells is required for their homeostasis, localization and ability to induce B- and T-cell responses: GPR183 acts as a chemotactic receptor in dendritic cells that mediates the accumulation of CD4(+) dendritic cells in bridging channels. Regulates migration of astrocytes and is involved in communication between astrocytes and macrophages. Promotes osteoclast precursor migration to bone surfaces. Signals constitutively through G(i)-alpha, but not G(s)-alpha or G(q)-alpha. Signals constitutively also via MAPK1/3 (ERK1/2). The protein is G-protein coupled receptor 183 (Gpr183) of Rattus norvegicus (Rat).